Here is a 709-residue protein sequence, read N- to C-terminus: Methylmalonyl-CoA mutase (709 aa).

Substrate-binding positions include 73 to 77 (TIRQY), 183 to 185 (TIQ), Arg195, Lys222, His232, and 271 to 273 (RLS). Residues 579–709 (RPRMLVVKMG…ILDLIREARS (131 aa)) enclose the B12-binding domain. His592 is an adenosylcob(III)alamin binding site.

It belongs to the methylmalonyl-CoA mutase family. In terms of assembly, homodimer. Adenosylcob(III)alamin is required as a cofactor.

The enzyme catalyses (R)-methylmalonyl-CoA = succinyl-CoA. Its pathway is metabolic intermediate metabolism; propanoyl-CoA degradation; succinyl-CoA from propanoyl-CoA: step 3/3. Functionally, radical enzyme that catalyzes the transformation of (2R)-methylmalonyl-CoA to succinyl-CoA. Is involved in the ethylmalonyl-CoA pathway for acetyl-CoA assimilation required for R.sphaeroides growth on acetate as sole carbon source. The protein is Methylmalonyl-CoA mutase of Cereibacter sphaeroides (strain ATCC 17023 / DSM 158 / JCM 6121 / CCUG 31486 / LMG 2827 / NBRC 12203 / NCIMB 8253 / ATH 2.4.1.) (Rhodobacter sphaeroides).